Here is a 278-residue protein sequence, read N- to C-terminus: NADPH-dependent 7-cyano-7-deazaguanine reductase (278 aa).

Substrate is bound at residue I87–S89. Position 89 to 90 (S89 to K90) interacts with NADPH. Catalysis depends on C185, which acts as the Thioimide intermediate. D192 functions as the Proton donor in the catalytic mechanism. H224 to E225 lines the substrate pocket. Residue R253–G254 participates in NADPH binding. Residues G255 to Q278 are disordered. Residues Y261–Q278 are compositionally biased toward polar residues.

Belongs to the GTP cyclohydrolase I family. QueF type 2 subfamily. As to quaternary structure, homodimer.

It is found in the cytoplasm. The enzyme catalyses 7-aminomethyl-7-carbaguanine + 2 NADP(+) = 7-cyano-7-deazaguanine + 2 NADPH + 3 H(+). The protein operates within tRNA modification; tRNA-queuosine biosynthesis. In terms of biological role, catalyzes the NADPH-dependent reduction of 7-cyano-7-deazaguanine (preQ0) to 7-aminomethyl-7-deazaguanine (preQ1). The polypeptide is NADPH-dependent 7-cyano-7-deazaguanine reductase (Coxiella burnetii (strain CbuK_Q154) (Coxiella burnetii (strain Q154))).